The sequence spans 469 residues: ATP synthase subunit beta (469 aa).

Residue 153–160 (GGAGVGKT) participates in ATP binding.

This sequence belongs to the ATPase alpha/beta chains family. As to quaternary structure, F-type ATPases have 2 components, CF(1) - the catalytic core - and CF(0) - the membrane proton channel. CF(1) has five subunits: alpha(3), beta(3), gamma(1), delta(1), epsilon(1). CF(0) has three main subunits: a(1), b(2) and c(9-12). The alpha and beta chains form an alternating ring which encloses part of the gamma chain. CF(1) is attached to CF(0) by a central stalk formed by the gamma and epsilon chains, while a peripheral stalk is formed by the delta and b chains.

Its subcellular location is the cell inner membrane. It carries out the reaction ATP + H2O + 4 H(+)(in) = ADP + phosphate + 5 H(+)(out). Functionally, produces ATP from ADP in the presence of a proton gradient across the membrane. The catalytic sites are hosted primarily by the beta subunits. The polypeptide is ATP synthase subunit beta (Pseudothermotoga lettingae (strain ATCC BAA-301 / DSM 14385 / NBRC 107922 / TMO) (Thermotoga lettingae)).